The sequence spans 288 residues: Acetyl-coenzyme A carboxylase carboxyl transferase subunit beta (288 aa).

One can recognise a CoA carboxyltransferase N-terminal domain in the interval 24–288 (LWVKCPESGE…TRTPRASEAA (265 aa)).

This sequence belongs to the AccD/PCCB family. As to quaternary structure, acetyl-CoA carboxylase is a heterohexamer composed of biotin carboxyl carrier protein (AccB), biotin carboxylase (AccC) and two subunits each of ACCase subunit alpha (AccA) and ACCase subunit beta (AccD).

The protein resides in the cytoplasm. It carries out the reaction N(6)-carboxybiotinyl-L-lysyl-[protein] + acetyl-CoA = N(6)-biotinyl-L-lysyl-[protein] + malonyl-CoA. It functions in the pathway lipid metabolism; malonyl-CoA biosynthesis; malonyl-CoA from acetyl-CoA: step 1/1. Its function is as follows. Component of the acetyl coenzyme A carboxylase (ACC) complex. Biotin carboxylase (BC) catalyzes the carboxylation of biotin on its carrier protein (BCCP) and then the CO(2) group is transferred by the transcarboxylase to acetyl-CoA to form malonyl-CoA. The protein is Acetyl-coenzyme A carboxylase carboxyl transferase subunit beta of Methylocella silvestris (strain DSM 15510 / CIP 108128 / LMG 27833 / NCIMB 13906 / BL2).